Reading from the N-terminus, the 98-residue chain is NADH-ubiquinone oxidoreductase chain 4L (98 aa).

Helical transmembrane passes span 2–22 (PSISTNIILAFTAALTGMLVF), 29–49 (SLLCLEGMMLSMFILSTLTIM), and 61–81 (ILLLVFAACEAAIGLALLVMM).

It belongs to the complex I subunit 4L family. As to quaternary structure, core subunit of respiratory chain NADH dehydrogenase (Complex I) which is composed of 45 different subunits.

The protein localises to the mitochondrion inner membrane. It carries out the reaction a ubiquinone + NADH + 5 H(+)(in) = a ubiquinol + NAD(+) + 4 H(+)(out). In terms of biological role, core subunit of the mitochondrial membrane respiratory chain NADH dehydrogenase (Complex I) which catalyzes electron transfer from NADH through the respiratory chain, using ubiquinone as an electron acceptor. Part of the enzyme membrane arm which is embedded in the lipid bilayer and involved in proton translocation. This Lepilemur seali (Seal's sportive lemur) protein is NADH-ubiquinone oxidoreductase chain 4L (MT-ND4L).